Consider the following 524-residue polypeptide: Inosine-5'-monophosphate dehydrogenase 4 (524 aa).

2 CBS domains span residues Phe122–Glu183 and Met185–Ser241. Phosphoserine is present on Ser125. Residues Asp279–Ser281 and Gly329–Gly331 contribute to the NAD(+) site. The K(+) site is built by Gly331 and Gly333. Ser334 contacts IMP. Cys336 contacts K(+). The active-site Thioimidate intermediate is Cys336. Residues Asp369 to Gly371, Gly392 to Gly393, and Tyr416 to Gly420 each bind IMP. Arg438 serves as the catalytic Proton acceptor. An IMP-binding site is contributed by Gln450. 3 residues coordinate K(+): Glu509, Gly510, and Gly511.

It belongs to the IMPDH/GMPR family. Homotetramer. Seems to be able to form heterotetramers composed from more than 1 of the 3 IMPDH gene products (IMD2-4). Requires K(+) as cofactor.

It is found in the cytoplasm. It carries out the reaction IMP + NAD(+) + H2O = XMP + NADH + H(+). Its pathway is purine metabolism; XMP biosynthesis via de novo pathway; XMP from IMP: step 1/1. Its activity is regulated as follows. Mycophenolic acid (MPA) is a non-competitive inhibitor that prevents formation of the closed enzyme conformation by binding to the same site as the amobile flap. In contrast, mizoribine monophosphate (MZP) is a competitive inhibitor that induces the closed conformation. MPA is a potent inhibitor of mammalian IMPDHs but a poor inhibitor of the bacterial enzymes. MZP is a more potent inhibitor of bacterial IMPDH. In terms of biological role, catalyzes the conversion of inosine 5'-phosphate (IMP) to xanthosine 5'-phosphate (XMP), the first committed and rate-limiting step in the de novo synthesis of guanine nucleotides, and therefore plays an important role in the regulation of cell growth. In Saccharomyces cerevisiae (strain ATCC 204508 / S288c) (Baker's yeast), this protein is Inosine-5'-monophosphate dehydrogenase 4.